A 122-amino-acid polypeptide reads, in one-letter code: Atrial gland peptide B (122 aa).

The first 21 residues, 1-21 (MKANTMFIILCLTLSTLCVSS), serve as a signal peptide directing secretion. Positions 22–34 (QFTSVLGKIFVTN) are excised as a propeptide. I69 carries the isoleucine amide modification. Positions 73-122 (AAGGMEQSEGQNPETKSHSWRERSVLTPSLLSLGESLESGISKRISINQD) are excised as a propeptide. A disordered region spans residues 74-95 (AGGMEQSEGQNPETKSHSWRER).

It belongs to the molluscan ELH family.

It is found in the secreted. Functionally, the atrial gland peptide A and peptide B precursors are the source of the 2 peptides that, upon release from this reproductive system gland, initiate the egg-laying process by exciting the bag cell neurons. These neurons, clustered in neural connectives near the abdominal ganglion, in turn release other peptides that act directly on the ganglion and also, via the circulating hemolymph, on many other organs to control the physiological processes of egg-laying. One of these other peptides is the egg-laying hormone. This chain is Atrial gland peptide B, found in Aplysia californica (California sea hare).